The following is a 424-amino-acid chain: Serine--tRNA ligase (424 aa).

230–232 serves as a coordination point for L-serine; it reads TAE. Residue 261-263 participates in ATP binding; it reads RSE. Glu284 is a binding site for L-serine. ATP is bound at residue 348-351; sequence EISS. Residue Ser382 coordinates L-serine.

This sequence belongs to the class-II aminoacyl-tRNA synthetase family. Type-1 seryl-tRNA synthetase subfamily. Homodimer. The tRNA molecule binds across the dimer.

It localises to the cytoplasm. The enzyme catalyses tRNA(Ser) + L-serine + ATP = L-seryl-tRNA(Ser) + AMP + diphosphate + H(+). The catalysed reaction is tRNA(Sec) + L-serine + ATP = L-seryl-tRNA(Sec) + AMP + diphosphate + H(+). The protein operates within aminoacyl-tRNA biosynthesis; selenocysteinyl-tRNA(Sec) biosynthesis; L-seryl-tRNA(Sec) from L-serine and tRNA(Sec): step 1/1. Functionally, catalyzes the attachment of serine to tRNA(Ser). Is also able to aminoacylate tRNA(Sec) with serine, to form the misacylated tRNA L-seryl-tRNA(Sec), which will be further converted into selenocysteinyl-tRNA(Sec). The chain is Serine--tRNA ligase from Solibacter usitatus (strain Ellin6076).